The following is a 177-amino-acid chain: Large ribosomal subunit protein uL6 (177 aa).

It belongs to the universal ribosomal protein uL6 family. In terms of assembly, part of the 50S ribosomal subunit.

Its function is as follows. This protein binds to the 23S rRNA, and is important in its secondary structure. It is located near the subunit interface in the base of the L7/L12 stalk, and near the tRNA binding site of the peptidyltransferase center. The chain is Large ribosomal subunit protein uL6 from Erythrobacter litoralis (strain HTCC2594).